We begin with the raw amino-acid sequence, 272 residues long: Endoplasmic reticulum resident protein 27 (272 aa).

The N-terminal stretch at 1–25 (MKITRSRCLILSFVLVCGLVPEVTA) is a signal peptide. Residues 39 to 152 (EPIWLTDVPA…WVTEYSPMIA (114 aa)) form the Thioredoxin domain. Residues Asn-91 and Asn-100 are each glycosylated (N-linked (GlcNAc...) asparagine). The PDIA3-binding site stretch occupies residues 230 to 233 (DKWD). The Prevents secretion from ER motif lies at 269–272 (KEEL).

The protein belongs to the protein disulfide isomerase family. In terms of assembly, interacts with PDIA3.

It localises to the endoplasmic reticulum lumen. In terms of biological role, specifically binds unfolded proteins and may recruit protein disulfide isomerase PDIA3 to unfolded substrates. Binds protein substrates via a hydrophobic pocket in the C-terminal domain. May play a role in the unfolded stress response. The polypeptide is Endoplasmic reticulum resident protein 27 (Erp27) (Mus musculus (Mouse)).